Here is a 681-residue protein sequence, read N- to C-terminus: Minichromosome maintenance domain-containing protein 2 (681 aa).

At serine 292 the chain carries Phosphoserine. The MCM domain occupies 533–621 (KQFTTEDFEK…LIAALLLEIS (89 aa)).

In terms of tissue distribution, predominantly expressed in the gonads and the brain. Not detected in the heart, lung, nor embryonic fibroblasts.

In terms of biological role, plays an important role in meiotic recombination and associated DNA double-strand break repair. In Mus musculus (Mouse), this protein is Minichromosome maintenance domain-containing protein 2 (Mcmdc2).